The chain runs to 908 residues: SH3 and PX domain-containing protein 2B (908 aa).

The region spanning 5–129 (RSIVEVKVLD…QFFETRPEDL (125 aa)) is the PX domain. Position 25 is a phosphotyrosine (tyrosine 25). SH3 domains lie at 152-211 (MVLE…GQDG) and 221-280 (EEEE…KNSG). 2 positions are modified to phosphoserine: serine 279 and serine 291. Disordered stretches follow at residues 280-300 (GEPL…ALDL) and 315-366 (ELLN…PPIP). Basic and acidic residues predominate over residues 315 to 337 (ELLNNQRDGRFEGRLVPDGDVKQ). Positions 338–347 (RSPKMRQRPP) are enriched in basic residues. Residues 368–427 (QVEEEYYTIAEFQTTIPDGISFQAGLKVEVIEKSLSGWWYIQMEDKEGWAPATFIDKYKK) form the SH3 3 domain. The interval 455–832 (TENNTGPEAV…LGPRVTGKVG (378 aa)) is disordered. Basic and acidic residues-rich tracts occupy residues 486 to 499 (KDWK…RKAS), 516 to 546 (QEEK…KMEP), 569 to 584 (LARD…DKSK), 595 to 606 (CGHKVLAKEVKK), and 615 to 625 (SKAELSEEKVD). Phosphoserine occurs at positions 499 and 528. Tyrosine 661 is subject to Phosphotyrosine. Basic and acidic residues predominate over residues 671 to 684 (KSQEKALLDGESHH). Pro residues predominate over residues 754 to 764 (VVPPRRPPPPK). Phosphoserine is present on serine 840. The region spanning 847–908 (PKDSLYVAVA…IPSNYLRKKP (62 aa)) is the SH3 4 domain.

It belongs to the SH3PXD2 family. As to quaternary structure, interacts with NOXO1. Interacts (via SH3 domains) with NOXA1; the interaction is direct. Interacts with ADAM15. Interacts with FASLG. In terms of processing, phosphorylated in SRC-transformed cells. Highly expressed in the stromal-vascular fraction of white adipose tissue with moderate expression in heart, skeletal muscle and the mature adipocyte fraction of white adipose tissue. Also expressed in brain, spleen, kidney and liver. Expressed in white and brown adipose tissues, eye, lung, heart, brain, spleen, stomach, liver and skeletal muscle (at protein level). Not expressed in kidney or bone marrow.

Its subcellular location is the cytoplasm. The protein resides in the cell projection. It is found in the podosome. Functionally, adapter protein involved in invadopodia and podosome formation and extracellular matrix degradation. Binds matrix metalloproteinases (ADAMs), NADPH oxidases (NOXs) and phosphoinositides. Acts as an organizer protein that allows NOX1- or NOX3-dependent reactive oxygen species (ROS) generation and ROS localization. Plays a role in mitotic clonal expansion during the immediate early stage of adipocyte differentiation. In Mus musculus (Mouse), this protein is SH3 and PX domain-containing protein 2B (Sh3pxd2b).